The following is a 519-amino-acid chain: Serine/threonine-protein kinase RIO1 (519 aa).

The segment covering 1 to 10 (MTPAPEPQDP) has biased composition (pro residues). The disordered stretch occupies residues 1–54 (MTPAPEPQDPPTIHEPVATEQTDDISDWDVESDYEDGYGAPSKSQAQGGASAAD). Acidic residues predominate over residues 21 to 36 (QTDDISDWDVESDYED). Positions 39 to 53 (GAPSKSQAQGGASAA) are enriched in low complexity. A Protein kinase domain is found at 122–519 (SEIYGTISTG…KLVAANKKRK (398 aa)). 2 residues coordinate ATP: K154 and L228. The Proton acceptor role is filled by D281. Residues N286 and D298 each contribute to the Mg(2+) site. D298 acts as the 4-aspartylphosphate intermediate in catalysis. The segment at 418-519 (ADSKVPESTG…KLVAANKKRK (102 aa)) is disordered. Residues 439 to 464 (GSEDEEGDEGESGEVESGDEEREEGE) show a composition bias toward acidic residues. An association with (pre-)40S ribosomal particle region spans residues 440–519 (SEDEEGDEGE…KLVAANKKRK (80 aa)). Basic residues-rich tracts occupy residues 470 to 489 (KKRP…AHKM) and 497 to 519 (EKRK…KKRK).

The protein belongs to the protein kinase superfamily. RIO-type Ser/Thr kinase family. The cofactor is Mg(2+). Post-translationally, autophosphorylated.

It localises to the cytoplasm. It catalyses the reaction L-seryl-[protein] + ATP = O-phospho-L-seryl-[protein] + ADP + H(+). The catalysed reaction is L-threonyl-[protein] + ATP = O-phospho-L-threonyl-[protein] + ADP + H(+). It carries out the reaction ATP + H2O = ADP + phosphate + H(+). In terms of biological role, involved in the final steps of cytoplasmic maturation of the 40S ribosomal subunit. In vitro, has strong ATPase activity and only low protein kinase activity. This is Serine/threonine-protein kinase RIO1 from Chaetomium thermophilum (strain DSM 1495 / CBS 144.50 / IMI 039719) (Thermochaetoides thermophila).